A 208-amino-acid chain; its full sequence is Effector protein MavE (208 aa).

Residues 77 to 80 (NPRY) carry the NPxY eukaryotic motif motif. Residues 184–204 (VLFPFVAATVAVAATAASVLF) traverse the membrane as a helical segment.

As to quaternary structure, homotrimer.

Its subcellular location is the secreted. The protein localises to the host vacuole. It localises to the host pathogen-containing vacuole. The protein resides in the host pathogen-containing vacuole membrane. Virulence effector that is indispensable for endoplasmic reticulum (ER)-mediated remodeling of the Legionella pneumophila-containing vacuole (LCV) and lysosomal evasion. Essential for intracellular replication in human monocyte-derived macrophages (hMDMs) and amoebae, as well as for intrapulmonary proliferation in mice. The sequence is that of Effector protein MavE from Legionella pneumophila subsp. pneumophila (strain Philadelphia 1 / ATCC 33152 / DSM 7513).